We begin with the raw amino-acid sequence, 350 residues long: Phosphoribosylformylglycinamidine cyclo-ligase (350 aa).

The protein belongs to the AIR synthase family.

It localises to the cytoplasm. The catalysed reaction is 2-formamido-N(1)-(5-O-phospho-beta-D-ribosyl)acetamidine + ATP = 5-amino-1-(5-phospho-beta-D-ribosyl)imidazole + ADP + phosphate + H(+). It participates in purine metabolism; IMP biosynthesis via de novo pathway; 5-amino-1-(5-phospho-D-ribosyl)imidazole from N(2)-formyl-N(1)-(5-phospho-D-ribosyl)glycinamide: step 2/2. This Cupriavidus taiwanensis (strain DSM 17343 / BCRC 17206 / CCUG 44338 / CIP 107171 / LMG 19424 / R1) (Ralstonia taiwanensis (strain LMG 19424)) protein is Phosphoribosylformylglycinamidine cyclo-ligase.